Reading from the N-terminus, the 183-residue chain is MIVGLIGVVEKISALETHIEVQGVVYGVQVSMRTAALLQAGQKARLKILQVIKEDAHLLYGFLEEGEKILFERLLKINGVGGRIALAILSSFSPNEFENIIATKEVKRLQQVPGIGKKLADKIMVDLIGFFIQDETKPMHNEVFLALESLGFKSAEINKVLKTLKPSLSIEAAIKEALQQLRS.

Positions Met1 to Leu63 are domain I. The tract at residues Glu64–Asn141 is domain II. Asn141 is a region of interest (flexible linker). The domain III stretch occupies residues Asn141 to Ser183.

It belongs to the RuvA family. Homotetramer. Forms an RuvA(8)-RuvB(12)-Holliday junction (HJ) complex. HJ DNA is sandwiched between 2 RuvA tetramers; dsDNA enters through RuvA and exits via RuvB. An RuvB hexamer assembles on each DNA strand where it exits the tetramer. Each RuvB hexamer is contacted by two RuvA subunits (via domain III) on 2 adjacent RuvB subunits; this complex drives branch migration. In the full resolvosome a probable DNA-RuvA(4)-RuvB(12)-RuvC(2) complex forms which resolves the HJ.

It is found in the cytoplasm. Its function is as follows. The RuvA-RuvB-RuvC complex processes Holliday junction (HJ) DNA during genetic recombination and DNA repair, while the RuvA-RuvB complex plays an important role in the rescue of blocked DNA replication forks via replication fork reversal (RFR). RuvA specifically binds to HJ cruciform DNA, conferring on it an open structure. The RuvB hexamer acts as an ATP-dependent pump, pulling dsDNA into and through the RuvAB complex. HJ branch migration allows RuvC to scan DNA until it finds its consensus sequence, where it cleaves and resolves the cruciform DNA. The protein is Holliday junction branch migration complex subunit RuvA of Helicobacter pylori (strain G27).